The following is a 425-amino-acid chain: CBS domain-containing protein CBSX6 (425 aa).

One can recognise a CBS 1 domain in the interval Gly16–Glu90. Positions Ser159–Ser172 are enriched in low complexity. The tract at residues Ser159–Ser182 is disordered. Polar residues predominate over residues Thr173 to Ser182. 2 helical membrane-spanning segments follow: residues Ile200 to Ile220 and Tyr275 to Glu295. The CBS 2 domain occupies Met347–Phe409.

The protein localises to the vacuole membrane. This Arabidopsis thaliana (Mouse-ear cress) protein is CBS domain-containing protein CBSX6 (CBSX6).